The primary structure comprises 550 residues: Lariat debranching enzyme (550 aa).

Cys8 and His10 together coordinate a divalent metal cation. Phosphoserine is present on Ser28. Positions 39 and 84 each coordinate a divalent metal cation. The tract at residues 124–154 (SGIFKSHDYRKGHFECPPYNSSTIRSIYHVR) is lariat recognition loop. Lys128 carries the post-translational modification N6-acetyllysine. A divalent metal cation is bound by residues His174, His226, and His228. The tract at residues 390 to 550 (EHHQCGEYEQ…AVDDGDASAE (161 aa)) is disordered. Positions 416–426 (NTDTSALSSIN) are enriched in polar residues. Residues 430–445 (IMLDEEEEEEEEEEEA) show a composition bias toward acidic residues. The span at 450–483 (SDMNTPSVEPASDQASDLSTSFSDIRNLPSSMFV) shows a compositional bias: polar residues. Residues Ser470, Ser480, Ser484, Ser485, Ser489, Ser491, Ser494, Ser505, and Ser520 each carry the phosphoserine modification. A compositionally biased stretch (basic and acidic residues) spans 498–528 (KCGETVESGDEKDLAKFPLKRLSDEHEPEQR).

It belongs to the lariat debranching enzyme family. It depends on Fe(2+) as a cofactor. Zn(2+) serves as cofactor. Mn(2+) is required as a cofactor.

The protein localises to the nucleus. Its activity is regulated as follows. Active in presence of diverse metals including Fe(2+), Zn(2+), Mn(2+). Also activated by Ca(2+). Binds two metal cations in two adjacent alpha and beta metal-binding pockets. Functionally, cleaves the 2'-5' phosphodiester linkage at the branch point of excised lariat intron RNA and converts them into linear molecules that can be subsequently degraded, thereby facilitating ribonucleotide turnover. Linked to its role in pre-mRNA processing mechanism, may also participate in retrovirus replication and have an antiviral cell-intrinsic defense function. The sequence is that of Lariat debranching enzyme (Dbr1) from Mus musculus (Mouse).